Here is a 426-residue protein sequence, read N- to C-terminus: Serine--tRNA ligase (426 aa).

231–233 (TLE) is a binding site for L-serine. 262 to 264 (RSE) contributes to the ATP binding site. Position 285 (Glu285) interacts with L-serine. Residue 349-352 (EISS) participates in ATP binding. Ser385 is a binding site for L-serine.

The protein belongs to the class-II aminoacyl-tRNA synthetase family. Type-1 seryl-tRNA synthetase subfamily. In terms of assembly, homodimer. The tRNA molecule binds across the dimer.

It is found in the cytoplasm. The catalysed reaction is tRNA(Ser) + L-serine + ATP = L-seryl-tRNA(Ser) + AMP + diphosphate + H(+). The enzyme catalyses tRNA(Sec) + L-serine + ATP = L-seryl-tRNA(Sec) + AMP + diphosphate + H(+). It participates in aminoacyl-tRNA biosynthesis; selenocysteinyl-tRNA(Sec) biosynthesis; L-seryl-tRNA(Sec) from L-serine and tRNA(Sec): step 1/1. Catalyzes the attachment of serine to tRNA(Ser). Is also able to aminoacylate tRNA(Sec) with serine, to form the misacylated tRNA L-seryl-tRNA(Sec), which will be further converted into selenocysteinyl-tRNA(Sec). This is Serine--tRNA ligase from Malacoplasma penetrans (strain HF-2) (Mycoplasma penetrans).